Here is a 243-residue protein sequence, read N- to C-terminus: Probable aquaporin SIP1-2 (243 aa).

2 helical membrane passes run 12–32 and 42–62; these read VITF…AAIV and WAPL…FTVI. Positions 72-74 match the NPA 1 motif; sequence NPC. 3 helical membrane-spanning segments follow: residues 90–110, 135–155, and 162–182; these read FSLA…AITI, GAIS…LIIL, and LAKT…GSKF. An NPA 2 motif is present at residues 188–190; the sequence is NPA. The chain crosses the membrane as a helical span at residues 210–230; the sequence is VYWISSYTGAILSAMLFRIIF.

Belongs to the MIP/aquaporin (TC 1.A.8) family. SIP (TC 1.A.8.10) subfamily. As to expression, expressed in roots and above ground. Expressed in elongating regions of the root tips, cotyledons, minor veins and hydathode cells of the rosette leaves. Weakly expressed in vascular tissues of the flower petals, filaments of stamens, upper part of the styles and receptacles of the siliques.

It is found in the endoplasmic reticulum membrane. Water channel required to facilitate the transport of water across cell membrane. The chain is Probable aquaporin SIP1-2 (SIP1-2) from Arabidopsis thaliana (Mouse-ear cress).